The sequence spans 333 residues: Phospholipid phosphatase-related protein type 1 (333 aa).

The next 3 helical transmembrane spans lie at 12 to 32, 66 to 86, and 126 to 146; these read IIPC…LLAY, FIQP…IIFV, and FIGV…AGQV. An N-linked (GlcNAc...) asparagine glycan is attached at Asn162. 3 helical membrane passes run 200-217, 223-243, and 256-276; these read ASLS…ITST, SRLA…LTGL, and VVAG…CVVN.

Belongs to the PA-phosphatase related phosphoesterase family.

Its subcellular location is the cell membrane. It localises to the cell projection. The protein localises to the neuron projection. In terms of biological role, may play a role in neurite outgrowth and neurogenesis. In Danio rerio (Zebrafish), this protein is Phospholipid phosphatase-related protein type 1 (plppr1).